We begin with the raw amino-acid sequence, 938 residues long: Kexin (938 aa).

Positions 1–20 (MLPIKLLIFILGYLLSPTLQ) are cleaved as a signal peptide. N-linked (GlcNAc...) asparagine glycosylation is found at Asn-41 and Asn-193. Residues 179–489 (QWHLINLKYP…YGKTDAYKMV (311 aa)) form the Peptidase S8 domain. Catalysis depends on charge relay system residues Asp-213 and His-251. 2 disulfide bridges follow: Cys-267/Cys-414 and Cys-359/Cys-389. Ser-422 functions as the Charge relay system in the catalytic mechanism. Residues Asn-441, Asn-512, Asn-539, and Asn-599 are each glycosylated (N-linked (GlcNAc...) asparagine). Residues 498–647 (VKPQAWYYSD…QFRIFGESID (150 aa)) enclose the P/Homo B domain. Positions 671 to 768 (EKQNSKSTTT…DNDNDNGNKK (98 aa)) are disordered. Low complexity predominate over residues 677-691 (STTTTSSTTTATTTS). The segment covering 711–735 (KVDNSASITTSQTASLTSSNEQHQP) has biased composition (polar residues). Over residues 740 to 762 (SDSDSDTDDENKQEGEEDNDNDN) the composition is skewed to acidic residues. Residues 775–795 (GFYLMSIAVVGFIAVLLVMKF) form a helical membrane-spanning segment. Topologically, residues 796–924 (HKTPGSGRRR…SGTSTKKYKD (129 aa)) are cytoplasmic. Positions 798–808 (TPGSGRRRRRR) are enriched in basic residues. The interval 798 to 938 (TPGSGRRRRR…EDHKDVVGTQ (141 aa)) is disordered. The segment covering 820–831 (DYSDSDDDEDDF) has biased composition (acidic residues). Basic and acidic residues predominate over residues 832–849 (DTRRADDDSFDLGHRNDQ). Positions 850-859 (RVVSASQQQR) are enriched in low complexity. Residues 860 to 874 (QYDRQQDETRDRLFD) show a composition bias toward basic and acidic residues. A compositionally biased stretch (polar residues) spans 902–919 (QQSAKAPSNSEGNSGTST). The span at 921–938 (KYKDNEADEDHKDVVGTQ) shows a compositional bias: basic and acidic residues.

This sequence belongs to the peptidase S8 family. Furin subfamily. The cofactor is Ca(2+). Post-translationally, O-glycosylated.

It is found in the golgi apparatus. The protein resides in the trans-Golgi network membrane. The enzyme catalyses Cleavage of -Lys-Arg-|-Xaa- and -Arg-Arg-|-Xaa- bonds to process yeast alpha-factor pheromone and killer toxin precursors.. In Candida albicans (strain WO-1) (Yeast), this protein is Kexin (KEX2).